Here is a 115-residue protein sequence, read N- to C-terminus: Phosphoribosyl-AMP cyclohydrolase (115 aa).

Residue Asp80 participates in Mg(2+) binding. Cys81 serves as a coordination point for Zn(2+). Residues Asp82 and Asp84 each coordinate Mg(2+). Zn(2+) contacts are provided by Cys97 and Cys104.

The protein belongs to the PRA-CH family. Homodimer. Requires Mg(2+) as cofactor. It depends on Zn(2+) as a cofactor.

Its subcellular location is the cytoplasm. The enzyme catalyses 1-(5-phospho-beta-D-ribosyl)-5'-AMP + H2O = 1-(5-phospho-beta-D-ribosyl)-5-[(5-phospho-beta-D-ribosylamino)methylideneamino]imidazole-4-carboxamide. It participates in amino-acid biosynthesis; L-histidine biosynthesis; L-histidine from 5-phospho-alpha-D-ribose 1-diphosphate: step 3/9. Functionally, catalyzes the hydrolysis of the adenine ring of phosphoribosyl-AMP. The protein is Phosphoribosyl-AMP cyclohydrolase of Mycobacterium bovis (strain ATCC BAA-935 / AF2122/97).